Here is a 331-residue protein sequence, read N- to C-terminus: UDP-GalNAc:beta-1,3-N-acetylgalactosaminyltransferase 1 (331 aa).

Residues 1-20 (MAPALPITLPSKMSLRSLKW) are Cytoplasmic-facing. A helical; Signal-anchor for type II membrane protein membrane pass occupies residues 21–43 (SLLLLSLLSFLVMWYLSLPHYNV). At 44 to 331 (IERVNWMYFY…VMLRNTTCHY (288 aa)) the chain is on the lumenal side. Residues Asn-72, Asn-154, Asn-198, Asn-212, and Asn-326 are each glycosylated (N-linked (GlcNAc...) asparagine).

The protein belongs to the glycosyltransferase 31 family. Mg(2+) is required as a cofactor.

The protein localises to the golgi apparatus membrane. The catalysed reaction is a globoside Gb3Cer (d18:1(4E)) + UDP-N-acetyl-alpha-D-galactosamine = a globoside Gb4Cer (d18:1(4E)) + UDP + H(+). The protein operates within protein modification; protein glycosylation. Transfers N-acetylgalactosamine onto globotriaosylceramide. Plays a critical role in preimplantation stage embryonic development. In Sus scrofa (Pig), this protein is UDP-GalNAc:beta-1,3-N-acetylgalactosaminyltransferase 1 (B3GALNT1).